A 336-amino-acid chain; its full sequence is Mitochondrial thiamine diphosphate carrier 2 (336 aa).

A run of 6 helical transmembrane segments spans residues 11–27 (RRAL…GGIS), 88–105 (VPAL…FTVL), 127–150 (YLSY…FDLL), 182–199 (LYSG…YAGL), 230–246 (SVSS…AGTF), and 303–322 (GLFP…FVAY). Solcar repeat units follow at residues 11–111 (RRAL…LKTF), 124–210 (LSPY…FKRS), and 231–328 (VSSF…ISDW).

Belongs to the mitochondrial carrier (TC 2.A.29) family. In terms of tissue distribution, ubiquitous.

Its subcellular location is the mitochondrion inner membrane. In terms of biological role, mitochondrial transporter that mediates uptake of thiamine diphosphate (ThDP) into mitochondria. The chain is Mitochondrial thiamine diphosphate carrier 2 from Zea mays (Maize).